The chain runs to 630 residues: E3 ubiquitin-protein ligase TRIM41 (630 aa).

The RING-type; degenerate zinc-finger motif lies at 20 to 61 (CAICLDYFTDPVSIGCGHNFCRVCVTQLWGGEDEEDRDELDR). Residues 51–75 (EDEEDRDELDREEEEEEVGEEEEVE) are compositionally biased toward acidic residues. Disordered regions lie at residues 51-97 (EDEE…GDME) and 148-176 (EDED…PPPA). At T85 the chain carries Phosphothreonine. The segment covering 148–166 (EDEDEEEEVLEEDEEEELD) has biased composition (acidic residues). Residues 222 to 263 (NEQGICPRHQEALKLFCEVDEEAICVVCRESRSHKQHSVVPL) form a B box-type zinc finger. Zn(2+)-binding residues include C227, H230, C249, and H255. Residue K256 forms a Glycyl lysine isopeptide (Lys-Gly) (interchain with G-Cter in SUMO2) linkage. The stretch at 281 to 374 (LRKHLEAVQK…AEAQERSQQG (94 aa)) forms a coiled coil. Positions 413–630 (LTDAIVRKMS…SKGTRIKLCP (218 aa)) constitute a B30.2/SPRY domain. Position 447 is a phosphoserine (S447). Residues 503–535 (ARESTHHKEKVGSGGSSVSSGDASSSRHHHRRR) form a disordered region.

It belongs to the TRIM/RBCC family. As to quaternary structure, interacts with PRKCA. Interacts with NOD2. Interacts with TRIM17; this interaction prevents TRIM41 activity on ZSCAN2. Post-translationally, auto-ubiquitinated.

Its subcellular location is the cytoplasm. It localises to the nucleus. The enzyme catalyses S-ubiquitinyl-[E2 ubiquitin-conjugating enzyme]-L-cysteine + [acceptor protein]-L-lysine = [E2 ubiquitin-conjugating enzyme]-L-cysteine + N(6)-ubiquitinyl-[acceptor protein]-L-lysine.. It participates in protein modification; protein ubiquitination. Its function is as follows. E3 ligase that plays essential roles in innate antiviral response. Directly binds to influenza A virus or vesicular stomatitis virus nucleoproteins and targets them for ubiquitination and proteasomal degradation, thereby limiting viral infections. Activates the innate antiviral response by catalyzing monoubiquitination of CGAS, thereby activating CGAS. Also involved in innate antiviral response by mediating 'Lys-63'-linked polyubiquitylation of BCL10 which in turn hubs NEMO for activation of NF-kappa-B and IRF3 pathways. Catalyzes the ubiquitin-mediated degradation of other substrates including protein kinase C, ZSCAN21 or TOP3B suggesting additional roles besides its function in immune response. In Mus musculus (Mouse), this protein is E3 ubiquitin-protein ligase TRIM41.